The sequence spans 417 residues: UDP-N-acetylglucosamine 1-carboxyvinyltransferase (417 aa).

22-23 (KN) provides a ligand contact to phosphoenolpyruvate. Arg-93 serves as a coordination point for UDP-N-acetyl-alpha-D-glucosamine. The Proton donor role is filled by Cys-117. The residue at position 117 (Cys-117) is a 2-(S-cysteinyl)pyruvic acid O-phosphothioketal. Residues 122–126 (RPVDQ), Asp-305, and Ile-327 contribute to the UDP-N-acetyl-alpha-D-glucosamine site.

The protein belongs to the EPSP synthase family. MurA subfamily.

Its subcellular location is the cytoplasm. The catalysed reaction is phosphoenolpyruvate + UDP-N-acetyl-alpha-D-glucosamine = UDP-N-acetyl-3-O-(1-carboxyvinyl)-alpha-D-glucosamine + phosphate. It functions in the pathway cell wall biogenesis; peptidoglycan biosynthesis. Its function is as follows. Cell wall formation. Adds enolpyruvyl to UDP-N-acetylglucosamine. The protein is UDP-N-acetylglucosamine 1-carboxyvinyltransferase of Nitrosomonas eutropha (strain DSM 101675 / C91 / Nm57).